The primary structure comprises 393 residues: NAD(P)H-quinone oxidoreductase subunit H, chloroplastic (393 aa).

This sequence belongs to the complex I 49 kDa subunit family. In terms of assembly, NDH is composed of at least 16 different subunits, 5 of which are encoded in the nucleus.

It localises to the plastid. The protein localises to the chloroplast thylakoid membrane. It catalyses the reaction a plastoquinone + NADH + (n+1) H(+)(in) = a plastoquinol + NAD(+) + n H(+)(out). The enzyme catalyses a plastoquinone + NADPH + (n+1) H(+)(in) = a plastoquinol + NADP(+) + n H(+)(out). In terms of biological role, NDH shuttles electrons from NAD(P)H:plastoquinone, via FMN and iron-sulfur (Fe-S) centers, to quinones in the photosynthetic chain and possibly in a chloroplast respiratory chain. The immediate electron acceptor for the enzyme in this species is believed to be plastoquinone. Couples the redox reaction to proton translocation, and thus conserves the redox energy in a proton gradient. The polypeptide is NAD(P)H-quinone oxidoreductase subunit H, chloroplastic (Psilotum nudum (Whisk fern)).